The sequence spans 311 residues: Homeobox-leucine zipper protein HOX13 (311 aa).

A disordered region spans residues 1-74 (MKRPTSSSRK…PSCGLGEKKR (74 aa)). Over residues 35-54 (DEAEMEEVDEEEEEEVDEDM) the composition is skewed to acidic residues. The homeobox DNA-binding region spans 69–128 (LGEKKRRLALEQVRALERSFDTDNKLDPDRKARIARDLGLQPRQVAVWFQNRRARWKTKQ). Positions 127–171 (KQLERDFAALRARHDALRADCDALRRDKDALAAEIRELREKLPTK) are leucine-zipper.

Belongs to the HD-ZIP homeobox family. Class I subfamily. In terms of tissue distribution, expressed in seedlings, roots, stems, leaf sheaths and blades and panicles.

Its subcellular location is the nucleus. Functionally, probable transcription factor. In Oryza sativa subsp. japonica (Rice), this protein is Homeobox-leucine zipper protein HOX13 (HOX13).